Reading from the N-terminus, the 440-residue chain is MFLAQEIIRKKRDGHALSDEEIRFFINGIRDNTISEGQIAALAMTIFFHDMTMPERVSLTMAMRDSGTVLDWKSLHLNGPIVDKHSTGGVGDVTSLMLGPMVAACGGYIPMISGRGLGHTGGTLDKLESIPGFDIFPDDNRFREIIKDVGVAIIGQTSSLAPADKRFYATRDITATVDSIPLITASILAKKLAEGLDALVMDVKVGSGAFMPTYELSEALAEAIVGVANGAGVRTTALLTDMNQVLASSAGNAVEVREAVQFLTGEYRNPRLFDVTMALCVEMLISGKLAKDDAEARAKLQAVLDNGKAAEVFGRMVAAQKGPTDFVENYAKYLPTAMLTKAVYADTEGFVSEMDTRALGMAVVAMGGGRRQASDTIDYSVGFTDMARLGDQVDGQRPLAVIHAKDENSWQEAAKAVKAAIKLADKAPESTPTVYRRISE.

It belongs to the thymidine/pyrimidine-nucleoside phosphorylase family. In terms of assembly, homodimer.

The catalysed reaction is thymidine + phosphate = 2-deoxy-alpha-D-ribose 1-phosphate + thymine. It functions in the pathway pyrimidine metabolism; dTMP biosynthesis via salvage pathway; dTMP from thymine: step 1/2. The enzymes which catalyze the reversible phosphorolysis of pyrimidine nucleosides are involved in the degradation of these compounds and in their utilization as carbon and energy sources, or in the rescue of pyrimidine bases for nucleotide synthesis. The polypeptide is Thymidine phosphorylase (Escherichia coli O139:H28 (strain E24377A / ETEC)).